The following is a 647-amino-acid chain: Acetyl-coenzyme A synthetase (647 aa).

Residues 190-193 (RGGR) and threonine 310 contribute to the CoA site. ATP contacts are provided by residues 386–388 (GEP), 410–415 (DTWWQT), aspartate 499, and arginine 514. CoA is bound at residue serine 522. Arginine 525 contributes to the ATP binding site. The Mg(2+) site is built by valine 536, histidine 538, and valine 541. Arginine 583 contacts CoA. Lysine 608 bears the N6-acetyllysine mark.

It belongs to the ATP-dependent AMP-binding enzyme family. Mg(2+) is required as a cofactor. Acetylated. Deacetylation by the SIR2-homolog deacetylase activates the enzyme.

It catalyses the reaction acetate + ATP + CoA = acetyl-CoA + AMP + diphosphate. Catalyzes the conversion of acetate into acetyl-CoA (AcCoA), an essential intermediate at the junction of anabolic and catabolic pathways. AcsA undergoes a two-step reaction. In the first half reaction, AcsA combines acetate with ATP to form acetyl-adenylate (AcAMP) intermediate. In the second half reaction, it can then transfer the acetyl group from AcAMP to the sulfhydryl group of CoA, forming the product AcCoA. The chain is Acetyl-coenzyme A synthetase from Xylella fastidiosa (strain 9a5c).